The chain runs to 390 residues: Carbamoyl phosphate synthase small chain (390 aa).

The tract at residues 1-198 is CPSase; the sequence is MTSTPTPTPT…LGEGYAVGPE (198 aa). L-glutamine contacts are provided by Ser-53, Gly-250, and Gly-252. One can recognise a Glutamine amidotransferase type-1 domain in the interval 202 to 390; the sequence is RVVVLDYGVK…VGELKGRVEA (189 aa). Catalysis depends on Cys-279, which acts as the Nucleophile. L-glutamine contacts are provided by Leu-280, Gln-283, Asn-321, Gly-323, and Phe-324. Catalysis depends on residues His-363 and Glu-365.

Belongs to the CarA family. In terms of assembly, composed of two chains; the small (or glutamine) chain promotes the hydrolysis of glutamine to ammonia, which is used by the large (or ammonia) chain to synthesize carbamoyl phosphate. Tetramer of heterodimers (alpha,beta)4.

It carries out the reaction hydrogencarbonate + L-glutamine + 2 ATP + H2O = carbamoyl phosphate + L-glutamate + 2 ADP + phosphate + 2 H(+). The catalysed reaction is L-glutamine + H2O = L-glutamate + NH4(+). Its pathway is amino-acid biosynthesis; L-arginine biosynthesis; carbamoyl phosphate from bicarbonate: step 1/1. It participates in pyrimidine metabolism; UMP biosynthesis via de novo pathway; (S)-dihydroorotate from bicarbonate: step 1/3. Its function is as follows. Small subunit of the glutamine-dependent carbamoyl phosphate synthetase (CPSase). CPSase catalyzes the formation of carbamoyl phosphate from the ammonia moiety of glutamine, carbonate, and phosphate donated by ATP, constituting the first step of 2 biosynthetic pathways, one leading to arginine and/or urea and the other to pyrimidine nucleotides. The small subunit (glutamine amidotransferase) binds and cleaves glutamine to supply the large subunit with the substrate ammonia. This Maricaulis maris (strain MCS10) (Caulobacter maris) protein is Carbamoyl phosphate synthase small chain.